The following is a 270-amino-acid chain: 4-hydroxy-tetrahydrodipicolinate reductase (270 aa).

NAD(+) contacts are provided by residues 8 to 13 (GALGRM), aspartate 34, 102 to 104 (GTT), and 128 to 131 (SQNY). The active-site Proton donor/acceptor is histidine 160. Residue histidine 161 coordinates (S)-2,3,4,5-tetrahydrodipicolinate. Lysine 164 (proton donor) is an active-site residue. Residue 170 to 171 (GT) coordinates (S)-2,3,4,5-tetrahydrodipicolinate.

It belongs to the DapB family.

The protein resides in the cytoplasm. The catalysed reaction is (S)-2,3,4,5-tetrahydrodipicolinate + NAD(+) + H2O = (2S,4S)-4-hydroxy-2,3,4,5-tetrahydrodipicolinate + NADH + H(+). It carries out the reaction (S)-2,3,4,5-tetrahydrodipicolinate + NADP(+) + H2O = (2S,4S)-4-hydroxy-2,3,4,5-tetrahydrodipicolinate + NADPH + H(+). Its pathway is amino-acid biosynthesis; L-lysine biosynthesis via DAP pathway; (S)-tetrahydrodipicolinate from L-aspartate: step 4/4. Its function is as follows. Catalyzes the conversion of 4-hydroxy-tetrahydrodipicolinate (HTPA) to tetrahydrodipicolinate. The sequence is that of 4-hydroxy-tetrahydrodipicolinate reductase from Methanococcus vannielii (strain ATCC 35089 / DSM 1224 / JCM 13029 / OCM 148 / SB).